Reading from the N-terminus, the 67-residue chain is Ayadualin (67 aa).

Positions 1–20 (MNKIILFSAVFLALVFCAEA) are cleaved as a signal peptide. Residues 35-54 (PDDTVDIDEGLPDAFDEDYE) show a composition bias toward acidic residues. The disordered stretch occupies residues 35-67 (PDDTVDIDEGLPDAFDEDYEQDGHNPYPCRGDC). An Integrin-binding motif motif is present at residues 64-66 (RGD).

In terms of tissue distribution, salivary gland.

It localises to the secreted. In terms of biological role, inhibits collagen- and ADP-induced host platelet aggregation by blocking the binding of host integrin alpha-IIb/beta-3 (ITGA2B/ITGB3) to fibrinogen. Inhibits the intrinsic blood coagulation pathway in the host by blocking the activity of host coagulation factor XIIa (F12). The chain is Ayadualin from Lutzomyia ayacuchensis (Sand fly).